The primary structure comprises 271 residues: MSSHADSNPWTVPALAQAKRAGRKLVMLTAYDASFARTFDVNGVDLILVGDSLGMVMQGHDSTLAVTTADMVYHTAAVARALDRALLVADLSFQADATPERALDAATQLLQAGAEMVKIEGAGHKLEVIRYLVEREIPVCSHLGLTPQSVLRFGGYKVQGRGEAGEQLRRDAQAVVDAGASLVVLECVPTPIATQISAELSVPTIGIGAGPGCDGQVLVMHDMLGLDSGHRRPKFVKDFLAEGGSVAGAVRAYAQAVRDGSFPDAEHAYAA.

Aspartate 51 and aspartate 90 together coordinate Mg(2+). Residues 51–52, aspartate 90, and lysine 118 each bind 3-methyl-2-oxobutanoate; that span reads DS. Mg(2+) is bound at residue glutamate 120. Glutamate 186 acts as the Proton acceptor in catalysis.

It belongs to the PanB family. In terms of assembly, homodecamer; pentamer of dimers. The cofactor is Mg(2+).

It localises to the cytoplasm. The enzyme catalyses 3-methyl-2-oxobutanoate + (6R)-5,10-methylene-5,6,7,8-tetrahydrofolate + H2O = 2-dehydropantoate + (6S)-5,6,7,8-tetrahydrofolate. The protein operates within cofactor biosynthesis; (R)-pantothenate biosynthesis; (R)-pantoate from 3-methyl-2-oxobutanoate: step 1/2. Its function is as follows. Catalyzes the reversible reaction in which hydroxymethyl group from 5,10-methylenetetrahydrofolate is transferred onto alpha-ketoisovalerate to form ketopantoate. The chain is 3-methyl-2-oxobutanoate hydroxymethyltransferase from Xanthomonas oryzae pv. oryzae (strain PXO99A).